Reading from the N-terminus, the 293-residue chain is ATP synthase gamma chain (293 aa).

The protein belongs to the ATPase gamma chain family. As to quaternary structure, F-type ATPases have 2 components, CF(1) - the catalytic core - and CF(0) - the membrane proton channel. CF(1) has five subunits: alpha(3), beta(3), gamma(1), delta(1), epsilon(1). CF(0) has three main subunits: a, b and c.

The protein resides in the cell membrane. Its function is as follows. Produces ATP from ADP in the presence of a proton gradient across the membrane. The gamma chain is believed to be important in regulating ATPase activity and the flow of protons through the CF(0) complex. This is ATP synthase gamma chain from Streptococcus gordonii (strain Challis / ATCC 35105 / BCRC 15272 / CH1 / DL1 / V288).